The chain runs to 143 residues: Putative aryl-alcohol dehydrogenase AAD15 (143 aa).

The protein belongs to the aldo/keto reductase family. Aldo/keto reductase 2 subfamily.

In terms of biological role, putative aryl-alcohol dehydrogenase. The chain is Putative aryl-alcohol dehydrogenase AAD15 (AAD15) from Saccharomyces cerevisiae (strain ATCC 204508 / S288c) (Baker's yeast).